Reading from the N-terminus, the 191-residue chain is Peptidyl-tRNA hydrolase (191 aa).

Tyr-16 contacts tRNA. The active-site Proton acceptor is His-21. Residues Tyr-67, Asn-69, and Asn-115 each coordinate tRNA.

The protein belongs to the PTH family. Monomer.

Its subcellular location is the cytoplasm. The enzyme catalyses an N-acyl-L-alpha-aminoacyl-tRNA + H2O = an N-acyl-L-amino acid + a tRNA + H(+). In terms of biological role, hydrolyzes ribosome-free peptidyl-tRNAs (with 1 or more amino acids incorporated), which drop off the ribosome during protein synthesis, or as a result of ribosome stalling. Its function is as follows. Catalyzes the release of premature peptidyl moieties from peptidyl-tRNA molecules trapped in stalled 50S ribosomal subunits, and thus maintains levels of free tRNAs and 50S ribosomes. The polypeptide is Peptidyl-tRNA hydrolase (Wigglesworthia glossinidia brevipalpis).